A 52-amino-acid polypeptide reads, in one-letter code: Troponin C, skeletal muscle (52 aa).

2 consecutive EF-hand domains span residues 2–37 (KSEEELAEFFRIFDKNADGYIDAEELAEIIRSSGEH) and 38–52 (VTDEEIEELMKDGDK). Asp15, Asn17, Asp19, Tyr21, and Glu26 together coordinate Ca(2+).

It belongs to the troponin C family.

Functionally, troponin is the central regulatory protein of striated muscle contraction. Tn consists of three components: Tn-I which is the inhibitor of actomyosin ATPase, Tn-T which contains the binding site for tropomyosin and Tn-C. The binding of calcium to Tn-C abolishes the inhibitory action of Tn on actin filaments. The chain is Troponin C, skeletal muscle from Protopterus dolloi (Slender lungfish).